Here is a 428-residue protein sequence, read N- to C-terminus: C4-dicarboxylate transport protein (428 aa).

A run of 9 helical transmembrane segments spans residues 8 to 28 (SLYV…HFYP), 44 to 64 (LIKM…IAGM), 76 to 96 (VALL…LIIV), 142 to 162 (IGAF…LFGF), 184 to 204 (VIFG…FGAM), 222 to 242 (LIIC…GSIA), 289 to 309 (VVGL…SIYL), 326 to 346 (IFHQ…AAGV), and 352 to 372 (IVLA…LALI).

This sequence belongs to the dicarboxylate/amino acid:cation symporter (DAACS) (TC 2.A.23) family.

It localises to the cell inner membrane. Functionally, responsible for the transport of dicarboxylates such as succinate, fumarate, and malate from the periplasm across the membrane. The protein is C4-dicarboxylate transport protein of Klebsiella pneumoniae subsp. pneumoniae (strain ATCC 700721 / MGH 78578).